Consider the following 410-residue polypeptide: Elongation factor Tu, chloroplastic (410 aa).

Residues 10–215 (KPHINIGTIG…MVDKYFPTPE (206 aa)) enclose the tr-type G domain. The segment at 19–26 (GHVDHGKT) is G1. Residue 19–26 (GHVDHGKT) coordinates GTP. T26 is a Mg(2+) binding site. Positions 61–65 (GITIN) are G2. The tract at residues 82–85 (DCPG) is G3. GTP is bound by residues 82-86 (DCPGH) and 137-140 (NKAD). The segment at 137–140 (NKAD) is G4. A G5 region spans residues 175–177 (SAL).

This sequence belongs to the TRAFAC class translation factor GTPase superfamily. Classic translation factor GTPase family. EF-Tu/EF-1A subfamily.

It localises to the plastid. It is found in the chloroplast. The enzyme catalyses GTP + H2O = GDP + phosphate + H(+). GTP hydrolase that promotes the GTP-dependent binding of aminoacyl-tRNA to the A-site of ribosomes during protein biosynthesis. This chain is Elongation factor Tu, chloroplastic (tufA), found in Cyanidium caldarium (Red alga).